A 967-amino-acid chain; its full sequence is RNA polymerase-associated protein RapA (967 aa).

One can recognise a Helicase ATP-binding domain in the interval 163–337; it reads EVGQRTAPRV…FARLSLLDPD (175 aa). Position 176 to 183 (176 to 183) interacts with ATP; the sequence is DEVGLGKT. Positions 283 to 286 match the DEAH box motif; it reads DEAH. One can recognise a Helicase C-terminal domain in the interval 489 to 660; the sequence is RLEWLITFLK…KFLQNPTALE (172 aa).

This sequence belongs to the SNF2/RAD54 helicase family. RapA subfamily. In terms of assembly, interacts with the RNAP. Has a higher affinity for the core RNAP than for the holoenzyme. Its ATPase activity is stimulated by binding to RNAP.

Functionally, transcription regulator that activates transcription by stimulating RNA polymerase (RNAP) recycling in case of stress conditions such as supercoiled DNA or high salt concentrations. Probably acts by releasing the RNAP, when it is trapped or immobilized on tightly supercoiled DNA. Does not activate transcription on linear DNA. Probably not involved in DNA repair. This chain is RNA polymerase-associated protein RapA, found in Pasteurella multocida (strain Pm70).